Here is a 2085-residue protein sequence, read N- to C-terminus: MAAAEVDLGYLSAQANISQVDLETVVSAPTADLVKSVLAAVLSKIRELEQDKFHLNVELEGAIRGAESRCEQFKATSDKALKEVEELRQKLQSEESARRTLENELQTLKSSGSASLSEIETLRARIASLETSNRETLAIVDSKASANAALSEELQKQHQKILKLNQEINNLNQAVQTAQTAANSAKYREESLKQELELAKKNNDWYDNELKTKAAENLKIRKEKGAQIAQLQREKEDALSTIQSLQKTEQQLRKRLQEAQSKAEEALTKVQQLQESAARAEESFRQELESSKRLVELKDQQAQTHRNRLKEVELRLEKVKDDSAEEIRRVRRELEQAKEDLSQSEQQVQDLQSEVDRLRTLVESHDGVPGSVPQTPRANGSLLARPSSPFGTPASLRGKATQRATETLEELLKVKAQLASEQRRSQKLQEDLDDAVSMLEAKLPEIDELNAESERLRNEVIQMSEIMQQSYEERDAAVKAARKAEAAASQAQAEVKILRAQLRDLSTQIHVLIFNAHAKEKGMDQLTEEEIAQFERLQRGEISEGALEDLSDTHRFITERFTVFKDIYELQQKNEELLKLTRELATKMENEEALAAQRQAAQEHEEVQQLRATVAALQDEVRSITIRMKSHMTERDMFRRMLQQRATPAEIQKVLGTQADGEQREVLPSVEQPHANEAQLAAALRELQAQFDAYRNDQVTDRNAMREQIDKLSGEKGSLQSEVTKLSSQLTLATERYNMLESNFKALQSENQELQKRNQSLSEAAAKQDIRTQQVAEDLVEARGLVESLRSENANLKAEKALWRTIQERLTQDNESLAQEKTRLNGLLASQQSLLNERELSEAETKRRLQAQIDSLEAELSTTKRKLSEEIEESKKVQLRKEFDAQQFQKRIDELTSMISQVKEENIQVKTTRDHLQARVSELEIEVRNAQERAERLRPLPTPRAPAAAEQPSEEAQARIEELEGEVQELKNNLDLLTVQLEHAKQQAEQFKQLSKDMEEELSSLNESHEQYRQEMDAALASKANTINELQQRVEALTAELSNTNNELNMLRDSQSDVARKFEEKERMLNAEIARLKDEEERYKEAARFHQQDLRAQAEIATKAQQDYEQELVKHAEAAKLLQQLRAEHNELKTQAAAWRAEADSAKISLAQSEQSWEERRQRLEQEIAEIKARRDDMAAQNKLLHQQLDAVTAQITALQQKRTQGDVSGEAAAPAIADMATEGLRELNSYLRREKEILEVQYDIKVQEAKRLQQQLEYTQSQLDETRLKLEQERASQADSTRTSLTHKELMEKLNELNLIRESNVTLRNENQRAQALLEQKAARITELEAKIQPLEARIAELELDKGFKEEEIRQLQEARDGLQKRIETILSKYGQADPQEVEQLKAMIAALEGERDVLKQSEQALQQKVKEAENALETKTNEWKATREKLAEDFKARFRNMKTQRDEATNEKNTLQATLDGVKEQLAALEKELETTKQQLATATEKNTSLQQQLAASSTEQPAAAPVSAAPSDQINELTQQLQAVKQQLESVSAQKAAAEAQVEQLKQELAAAIAERDRALAATSGGDVATAETSVSAQPSAGLSDEERKALEEKIAAAEAKAAEFEKRAKELEEQADNIVKQRSDKMKTALNKKLQESKEAMEKQIQEEKAKLQAEFDLKLQQELAIIKAEQQTAGPQNGVPATPVKTEANAAPGTPVPDITNMTDAQIREAVAKNPTISAIVKSNVKRMVAAETKKIKEEIEAALKAEYEQKITNAKEQATALTEKKSALRINMLDRQHKTAQAKLAIVETAAKETPQKPVVEVWNIAKDAKPPAPAQAPAPAPASAAPSPAPTPAQPVAPATAAPAAPAQAPSAAPPKEETKQEAKTTTAAPPSAIPKPAVNPFTAPLNPFGAPAPTSNIPAPPQAGQQPQQTQPQQPQQPQQQQQQQKGQQQQQQQQQQQQGQQQQQQGQQQAGGQNQPQRMGIPVPAGRGGPGGARTARGLYQAGPRGARGGRGGGFVGAGRGAGGAAGGLNPNAGEFTPGGATATAAAAAAAGGAGGSAGAGNAGNKRQRDGEGGQPQGERGGKRARGGGGGGGGNQ.

6 coiled-coil regions span residues 44 to 367 (KIRE…SHDG), 399 to 513 (KATQ…HVLI), 568 to 630 (YELQ…RMKS), 675 to 1205 (ANEA…KRTQ), 1232 to 1667 (LRRE…LQQE), and 1744 to 1799 (EIEA…AAKE). The segment at 365-398 (HDGVPGSVPQTPRANGSLLARPSSPFGTPASLRG) is disordered. The interval 934 to 953 (AERLRPLPTPRAPAAAEQPS) is disordered. The short motif at 1159–1166 (ERRQRLEQ) is the Nuclear localization signal element. Residues 1482–1503 (LATATEKNTSLQQQLAASSTEQ) are compositionally biased toward polar residues. 2 disordered regions span residues 1482–1514 (LATA…AAPS) and 1567–1591 (SGGD…DEER). Over residues 1504 to 1514 (PAAAPVSAAPS) the composition is skewed to low complexity. Positions 1574 to 1584 (AETSVSAQPSA) are enriched in polar residues. Positions 1816-2085 (KPPAPAQAPA…GGGGGGGGNQ (270 aa)) are disordered. The segment covering 1817-1827 (PPAPAQAPAPA) has biased composition (pro residues). Low complexity-rich tracts occupy residues 1843–1858 (VAPA…QAPS), 1910–1974 (QAGQ…PVPA), and 1982–1994 (ARTA…AGPR). Gly residues predominate over residues 1995-2016 (GARGGRGGGFVGAGRGAGGAAG). Low complexity predominate over residues 2028 to 2040 (GGATATAAAAAAA). 2 stretches are compositionally biased toward gly residues: residues 2041 to 2051 (GGAGGSAGAGN) and 2076 to 2085 (GGGGGGGGNQ).

In terms of assembly, the nuclear pore complex (NPC) constitutes the exclusive means of nucleocytoplasmic transport. NPCs allow the passive diffusion of ions and small molecules and the active, nuclear transport receptor-mediated bidirectional transport of macromolecules such as proteins, RNAs, ribonucleoparticles (RNPs), and ribosomal subunits across the nuclear envelope. The 55-60 MDa NPC is composed of at least 28 different subunits: AMO1, ELYS, GLE1, GLE2, MLP1, NDC1, NIC96, NSP1, NUP133, NUP145, NUP152, NUP159, NUP170, NUP188, NUP192, NUP37, NUP49, NUP53, NUP56, NUP57, NUP82, NUP84, NUP85, POM152, POM33, POM34, SEC13 and SEH1. Due to its 8-fold rotational symmetry, all subunits are present with 8 copies or multiples thereof.

The protein resides in the nucleus. In terms of biological role, involved in the structural and functional organization of perinuclear chromatin. Associates with the nuclear pore complex and form filamentous structures along the nuclear periphery. This Chaetomium thermophilum (strain DSM 1495 / CBS 144.50 / IMI 039719) (Thermochaetoides thermophila) protein is Protein MLP1 homolog (MLP1).